The following is an 828-amino-acid chain: DNA topoisomerase 3 (828 aa).

Residues 4–149 (RILNVAEKPS…KFEFYRAHFS (146 aa)) form the Toprim domain. The region spanning 167–617 (NEKDSIAVDT…STIEKYKQLY (451 aa)) is the Topo IA-type catalytic domain. Tyrosine 361 functions as the O-(5'-phospho-DNA)-tyrosine intermediate in the catalytic mechanism. A disordered region spans residues 763-828 (QQQQQQQQQQ…SDRNNNNFIF (66 aa)).

The protein belongs to the type IA topoisomerase family.

It catalyses the reaction ATP-independent breakage of single-stranded DNA, followed by passage and rejoining.. Functionally, releases the supercoiling and torsional tension of DNA introduced during the DNA replication and transcription by transiently cleaving and rejoining one strand of the DNA duplex. Introduces a single-strand break via transesterification at a target site in duplex DNA. The scissile phosphodiester is attacked by the catalytic tyrosine of the enzyme, resulting in the formation of a DNA-(5'-phosphotyrosyl)-enzyme intermediate and the expulsion of a 3'-OH DNA strand. The free DNA strand than undergoes passage around the unbroken strand thus removing DNA supercoils. Finally, in the religation step, the DNA 3'-OH attacks the covalent intermediate to expel the active-site tyrosine and restore the DNA phosphodiester backbone. The chain is DNA topoisomerase 3 (top3) from Dictyostelium discoideum (Social amoeba).